The primary structure comprises 417 residues: NADH-quinone oxidoreductase subunit D (417 aa).

Belongs to the complex I 49 kDa subunit family. NDH-1 is composed of 14 different subunits. Subunits NuoB, C, D, E, F, and G constitute the peripheral sector of the complex.

The protein resides in the cell inner membrane. The catalysed reaction is a quinone + NADH + 5 H(+)(in) = a quinol + NAD(+) + 4 H(+)(out). In terms of biological role, NDH-1 shuttles electrons from NADH, via FMN and iron-sulfur (Fe-S) centers, to quinones in the respiratory chain. The immediate electron acceptor for the enzyme in this species is believed to be ubiquinone. Couples the redox reaction to proton translocation (for every two electrons transferred, four hydrogen ions are translocated across the cytoplasmic membrane), and thus conserves the redox energy in a proton gradient. This chain is NADH-quinone oxidoreductase subunit D, found in Francisella tularensis subsp. tularensis (strain FSC 198).